An 860-amino-acid chain; its full sequence is DNA mismatch repair protein MutS (860 aa).

618–625 (GPNMGGKS) is a binding site for ATP.

It belongs to the DNA mismatch repair MutS family.

Its function is as follows. This protein is involved in the repair of mismatches in DNA. It is possible that it carries out the mismatch recognition step. This protein has a weak ATPase activity. The chain is DNA mismatch repair protein MutS from Shewanella piezotolerans (strain WP3 / JCM 13877).